We begin with the raw amino-acid sequence, 379 residues long: Leukocyte elastase inhibitor A (379 aa).

Position 300 is a phosphoserine (Ser-300). Positions 351-379 (EFTVDHPFIFFIRHNPTSNVLFLGRVCSP) are CARD-binding motif (CBM).

It belongs to the serpin family. Ov-serpin subfamily. Monomer. Interacts (via C-terminus) with CASP1 and CASP4 (via CARD domain); these interactions regulate the activity of inflammatory caspases. As to expression, ubiquitous with higher expression in pancreas, spleen and bone marrow.

Its subcellular location is the secreted. It localises to the cytoplasm. The protein resides in the cytolytic granule. It is found in the early endosome. Functionally, neutrophil serine protease inhibitor that plays an essential role in the regulation of the innate immune response, inflammation and cellular homeostasis. Acts primarily to protect the cell from proteases released in the cytoplasm during stress or infection. These proteases are important in killing microbes but when released from granules, these potent enzymes also destroy host proteins and contribute to mortality. Regulates the activity of the neutrophil proteases elastase, cathepsin G, proteinase-3, chymase, chymotrypsin, and kallikrein-3. Also acts as a potent intracellular inhibitor of granzyme H. During inflammation, limits the activity of inflammatory caspases CASP1 and CASP4 by suppressing their caspase-recruitment domain (CARD) oligomerization and enzymatic activation. In addition, promotes the proliferation of beta-cells when secreted. The protein is Leukocyte elastase inhibitor A (Serpinb1a) of Mus musculus (Mouse).